A 60-amino-acid polypeptide reads, in one-letter code: Truncated protein A35 homolog (60 aa).

This sequence belongs to the chordopoxvirinae A35 protein family.

This chain is Truncated protein A35 homolog (A38R), found in Variola virus (isolate Human/India/Ind3/1967) (VARV).